The following is a 112-amino-acid chain: Integration host factor subunit alpha (112 aa).

The protein belongs to the bacterial histone-like protein family. As to quaternary structure, heterodimer of an alpha and a beta chain.

In terms of biological role, this protein is one of the two subunits of integration host factor, a specific DNA-binding protein that functions in genetic recombination as well as in transcriptional and translational control. This is Integration host factor subunit alpha from Agrobacterium fabrum (strain C58 / ATCC 33970) (Agrobacterium tumefaciens (strain C58)).